The sequence spans 252 residues: Imidazole glycerol phosphate synthase subunit HisF (252 aa).

Residues Asp-11 and Asp-130 contribute to the active site.

The protein belongs to the HisA/HisF family. Heterodimer of HisH and HisF.

The protein localises to the cytoplasm. It carries out the reaction 5-[(5-phospho-1-deoxy-D-ribulos-1-ylimino)methylamino]-1-(5-phospho-beta-D-ribosyl)imidazole-4-carboxamide + L-glutamine = D-erythro-1-(imidazol-4-yl)glycerol 3-phosphate + 5-amino-1-(5-phospho-beta-D-ribosyl)imidazole-4-carboxamide + L-glutamate + H(+). It functions in the pathway amino-acid biosynthesis; L-histidine biosynthesis; L-histidine from 5-phospho-alpha-D-ribose 1-diphosphate: step 5/9. In terms of biological role, IGPS catalyzes the conversion of PRFAR and glutamine to IGP, AICAR and glutamate. The HisF subunit catalyzes the cyclization activity that produces IGP and AICAR from PRFAR using the ammonia provided by the HisH subunit. The chain is Imidazole glycerol phosphate synthase subunit HisF from Azobacteroides pseudotrichonymphae genomovar. CFP2.